A 255-amino-acid chain; its full sequence is MPEIRTFLCRSDNIGVLLHDPVTSACAAIDVPEAGAVLRALKETGWRLTDILVTHRHFDHVEGIPEVKARTGARVTAPAKAGDAVPEVDATVREGDVVKVGSLVGTVWETPGHCADHVTYWFERERLAFAGDTLFTLGCGRVMESPPEVLWRSLSRFLALPDETAIYSGHDYVLSNARFALAADPDNSNLKARAELAERVKRDGRFLIPTTLGEEKATNPFLRAGEPALARSVDMAPGSDPAAVFAALREWKNRF.

Zn(2+) is bound by residues H55, H57, D59, H60, H113, D132, and H170.

This sequence belongs to the metallo-beta-lactamase superfamily. Glyoxalase II family. Monomer. Zn(2+) serves as cofactor.

The enzyme catalyses an S-(2-hydroxyacyl)glutathione + H2O = a 2-hydroxy carboxylate + glutathione + H(+). Its pathway is secondary metabolite metabolism; methylglyoxal degradation; (R)-lactate from methylglyoxal: step 2/2. Its function is as follows. Thiolesterase that catalyzes the hydrolysis of S-D-lactoyl-glutathione to form glutathione and D-lactic acid. The sequence is that of Hydroxyacylglutathione hydrolase from Methylobacterium nodulans (strain LMG 21967 / CNCM I-2342 / ORS 2060).